The following is a 68-amino-acid chain: Glu S.griseus protease inhibitor (68 aa).

Serine 1 bears the N-acetylserine mark. The cysteines at positions 3 and 48 are disulfide-linked.

Belongs to the protease inhibitor I13 (potato type I serine protease inhibitor) family.

Its function is as follows. Competitively inhibits Glu S.griseus protease by forming probably a 1:1 complex. BGIA has no inhibitory activity against 2 other acidic amino acid-specific endopeptidases (S.aureus protease V8 and B.subtilis proteinase), chymotrypsin, trypsin, pancreatic elastase, and papain, although subtilisin Carlsberg was strongly inhibited. In Momordica charantia (Bitter gourd), this protein is Glu S.griseus protease inhibitor.